We begin with the raw amino-acid sequence, 647 residues long: Protein FAM161B (647 aa).

Disordered stretches follow at residues 1 to 39 (MTVGRPEGAPGGAEGSRQIFPPESFADTEAGEELSGDGL), 89 to 110 (SDPESDENLSEDEEDLESFFQD), and 135 to 167 (LNNLPSNIPRPQTQPPSGSRPPSQHRSVSSWAS). Residues 91–105 (PESDENLSEDEEDLE) are compositionally biased toward acidic residues. Residues 262 to 292 (LEKEEQLKEAARQRDLAATAEAKISKQKATR) are a coiled coil. Polar residues predominate over residues 332-350 (PIASSSNRANPQPRTATRT). Disordered regions lie at residues 332 to 352 (PIASSSNRANPQPRTATRTQQ) and 388 to 439 (KRRE…RSRS). Positions 510-546 (LEEVFKAKLKENRNNDRKRAKEYKKELEEMKQRIQTR) form a coiled coil. A disordered region spans residues 583–647 (KGQGTRAVQE…QSPENLVSLA (65 aa)). Basic and acidic residues predominate over residues 590-602 (VQEKETKIKDFPR). The span at 637-647 (HQSPENLVSLA) shows a compositional bias: polar residues.

The protein belongs to the FAM161 family. Interacts with FAM161A. As to expression, ubiquitously expressed.

This is Protein FAM161B (FAM161B) from Homo sapiens (Human).